A 115-amino-acid chain; its full sequence is UPF0738 protein SSP1780 (115 aa).

Belongs to the UPF0738 family.

This chain is UPF0738 protein SSP1780, found in Staphylococcus saprophyticus subsp. saprophyticus (strain ATCC 15305 / DSM 20229 / NCIMB 8711 / NCTC 7292 / S-41).